Consider the following 286-residue polypeptide: Lipoyl synthase (286 aa).

[4Fe-4S] cluster-binding residues include Cys-34, Cys-39, Cys-45, Cys-60, Cys-64, Cys-67, and Ser-271. In terms of domain architecture, Radical SAM core spans 46–260 (WESGTATFMI…EESAYSIGFS (215 aa)).

Belongs to the radical SAM superfamily. Lipoyl synthase family. It depends on [4Fe-4S] cluster as a cofactor.

Its subcellular location is the cytoplasm. It carries out the reaction [[Fe-S] cluster scaffold protein carrying a second [4Fe-4S](2+) cluster] + N(6)-octanoyl-L-lysyl-[protein] + 2 oxidized [2Fe-2S]-[ferredoxin] + 2 S-adenosyl-L-methionine + 4 H(+) = [[Fe-S] cluster scaffold protein] + N(6)-[(R)-dihydrolipoyl]-L-lysyl-[protein] + 4 Fe(3+) + 2 hydrogen sulfide + 2 5'-deoxyadenosine + 2 L-methionine + 2 reduced [2Fe-2S]-[ferredoxin]. Its pathway is protein modification; protein lipoylation via endogenous pathway; protein N(6)-(lipoyl)lysine from octanoyl-[acyl-carrier-protein]: step 2/2. Its function is as follows. Catalyzes the radical-mediated insertion of two sulfur atoms into the C-6 and C-8 positions of the octanoyl moiety bound to the lipoyl domains of lipoate-dependent enzymes, thereby converting the octanoylated domains into lipoylated derivatives. In Picrophilus torridus (strain ATCC 700027 / DSM 9790 / JCM 10055 / NBRC 100828 / KAW 2/3), this protein is Lipoyl synthase.